We begin with the raw amino-acid sequence, 239 residues long: Immunoglobulin superfamily member 23 (239 aa).

Positions Glu-63 to Asn-93 are disordered. One can recognise an Ig-like domain in the interval Pro-94–Ser-179. The chain crosses the membrane as a helical span at residues Leu-214 to Leu-234.

Its subcellular location is the cell membrane. Functionally, may be involved in osteoclast differentiation. This is Immunoglobulin superfamily member 23 from Mus musculus (Mouse).